The chain runs to 139 residues: Small ribosomal subunit protein uS12m (139 aa).

A mitochondrion-targeting transit peptide spans 1–29 (MSWPGLLYGLTTSLSRGLALAPQLWAARS).

This sequence belongs to the universal ribosomal protein uS12 family. In terms of assembly, component of the mitochondrial ribosome small subunit (28S) which comprises a 12S rRNA and about 30 distinct proteins.

The protein resides in the mitochondrion. The chain is Small ribosomal subunit protein uS12m (Mrps12) from Mus musculus (Mouse).